Reading from the N-terminus, the 131-residue chain is Prefoldin subunit beta (131 aa).

Disordered regions lie at residues 19–41 and 112–131; these read LQET…RESE and LQGG…AGGA. The span at 20-35 shows a compositional bias: low complexity; it reads QETAQQVAQQKQQAET. The span at 114 to 131 shows a compositional bias: gly residues; it reads GGAGGGPMGPGGPGAGGA.

This sequence belongs to the prefoldin subunit beta family. As to quaternary structure, heterohexamer of two alpha and four beta subunits.

It is found in the cytoplasm. Its function is as follows. Molecular chaperone capable of stabilizing a range of proteins. Seems to fulfill an ATP-independent, HSP70-like function in archaeal de novo protein folding. In Natronomonas pharaonis (strain ATCC 35678 / DSM 2160 / CIP 103997 / JCM 8858 / NBRC 14720 / NCIMB 2260 / Gabara) (Halobacterium pharaonis), this protein is Prefoldin subunit beta.